The primary structure comprises 251 residues: Probable phosphatase Sputcn32_1369 (251 aa).

The Zn(2+) site is built by histidine 8, histidine 10, histidine 16, histidine 41, glutamate 74, histidine 102, histidine 132, aspartate 193, and histidine 195.

It belongs to the PHP family. The cofactor is Zn(2+).

This Shewanella putrefaciens (strain CN-32 / ATCC BAA-453) protein is Probable phosphatase Sputcn32_1369.